The sequence spans 597 residues: uncharacterized protein (597 aa).

2 helical membrane passes run 4-23 (LLLALLLCLAVGTAGGFKIV) and 209-231 (FVSVSAPGFVGVTAAMSSAGIAI).

It is found in the cell membrane. This is an uncharacterized protein from Archaeoglobus fulgidus (strain ATCC 49558 / DSM 4304 / JCM 9628 / NBRC 100126 / VC-16).